The chain runs to 561 residues: DISARM protein DrmB (561 aa).

It is found in the cytoplasm. Component of antiviral defense system DISARM (defense island system associated with restriction-modification), composed of DrmE, DrmA, DrmB, DrmC and DrmMII. DISARM is probably a multi-gene restriction module, this subunit has an unknown function. Expression of DISARM in B.subtilis (strain BEST7003) confers resistance to phages Nf, phi29, phi105, phi3T, SPO1, SPR and SPP1. Protection is over 10(7)-fold against phi3T, 10(4)-10(5)-fold against Nf, phi29, phi105 and SPR, 100-fold against SPO1 and 10-fold against SPP1. DISARM does not interfere with phage adsorption, but instead interferes with (phi3T) DNA replication early in its cycle, preventing replication, circularization and lysogeny and probably causes phage DNA degradation (DNA is degraded in SPP1-infected cells). This chain is DISARM protein DrmB, found in Bacillus paralicheniformis (strain ATCC 9945a / NCIMB 11709 / CD-2).